The sequence spans 674 residues: DNA ligase (674 aa).

NAD(+)-binding positions include 34 to 38, 84 to 85, and E116; these read DAEYD and SL. Catalysis depends on K118, which acts as the N6-AMP-lysine intermediate. NAD(+)-binding residues include R139, E174, K291, and K315. C409, C412, C425, and C430 together coordinate Zn(2+). The BRCT domain maps to 586-674; that stretch reads REGEALKGLT…TGKDPRALTA (89 aa).

It belongs to the NAD-dependent DNA ligase family. LigA subfamily. The cofactor is Mg(2+). Mn(2+) serves as cofactor.

It catalyses the reaction NAD(+) + (deoxyribonucleotide)n-3'-hydroxyl + 5'-phospho-(deoxyribonucleotide)m = (deoxyribonucleotide)n+m + AMP + beta-nicotinamide D-nucleotide.. In terms of biological role, DNA ligase that catalyzes the formation of phosphodiester linkages between 5'-phosphoryl and 3'-hydroxyl groups in double-stranded DNA using NAD as a coenzyme and as the energy source for the reaction. It is essential for DNA replication and repair of damaged DNA. This Thermus sp. (strain AK16D) protein is DNA ligase.